Consider the following 249-residue polypeptide: NAD(P)H-hydrate epimerase (249 aa).

Residues 11 to 233 (AQQIDVELMS…ELGKKHELNI (223 aa)) enclose the YjeF N-terminal domain. (6S)-NADPHX is bound at residue 62–66 (NQGGD). K(+)-binding residues include Gln63 and Asp127. (6S)-NADPHX contacts are provided by residues 131–137 (GFSFQPP) and Asp162. Residue Ser165 participates in K(+) binding.

The protein belongs to the NnrE/AIBP family. Requires K(+) as cofactor.

The protein localises to the cytoplasm. The protein resides in the mitochondrion. The catalysed reaction is (6R)-NADHX = (6S)-NADHX. It carries out the reaction (6R)-NADPHX = (6S)-NADPHX. Its function is as follows. Catalyzes the epimerization of the S- and R-forms of NAD(P)HX, a damaged form of NAD(P)H that is a result of enzymatic or heat-dependent hydration. This is a prerequisite for the S-specific NAD(P)H-hydrate dehydratase to allow the repair of both epimers of NAD(P)HX. The sequence is that of NAD(P)H-hydrate epimerase from Cryptococcus neoformans var. neoformans serotype D (strain JEC21 / ATCC MYA-565) (Filobasidiella neoformans).